We begin with the raw amino-acid sequence, 181 residues long: Adenine phosphoribosyltransferase (181 aa).

It belongs to the purine/pyrimidine phosphoribosyltransferase family. In terms of assembly, homodimer.

The protein resides in the cytoplasm. It catalyses the reaction AMP + diphosphate = 5-phospho-alpha-D-ribose 1-diphosphate + adenine. The protein operates within purine metabolism; AMP biosynthesis via salvage pathway; AMP from adenine: step 1/1. Functionally, catalyzes a salvage reaction resulting in the formation of AMP, that is energically less costly than de novo synthesis. This chain is Adenine phosphoribosyltransferase, found in Brucella abortus (strain S19).